The following is a 398-amino-acid chain: Phosphoglycerate kinase (398 aa).

Residues 21–23, R36, 59–62, R117, and R150 each bind substrate; these read DFN and HFGR. ATP contacts are provided by residues K200, E321, and 351–354; that span reads GGDS.

Belongs to the phosphoglycerate kinase family. Monomer.

Its subcellular location is the cytoplasm. The enzyme catalyses (2R)-3-phosphoglycerate + ATP = (2R)-3-phospho-glyceroyl phosphate + ADP. The protein operates within carbohydrate degradation; glycolysis; pyruvate from D-glyceraldehyde 3-phosphate: step 2/5. The sequence is that of Phosphoglycerate kinase from Wolbachia pipientis wMel.